The primary structure comprises 281 residues: Pantothenate synthetase (281 aa).

30-37 (MGYLHDGH) provides a ligand contact to ATP. His-37 functions as the Proton donor in the catalytic mechanism. Gln-61 serves as a coordination point for (R)-pantoate. Gln-61 provides a ligand contact to beta-alanine. 147-150 (GEKD) is a binding site for ATP. Gln-153 is a (R)-pantoate binding site. ATP is bound by residues Ile-176 and 184–187 (KSSR).

The protein belongs to the pantothenate synthetase family. Homodimer.

The protein resides in the cytoplasm. The catalysed reaction is (R)-pantoate + beta-alanine + ATP = (R)-pantothenate + AMP + diphosphate + H(+). Its pathway is cofactor biosynthesis; (R)-pantothenate biosynthesis; (R)-pantothenate from (R)-pantoate and beta-alanine: step 1/1. Its function is as follows. Catalyzes the condensation of pantoate with beta-alanine in an ATP-dependent reaction via a pantoyl-adenylate intermediate. This is Pantothenate synthetase from Clostridium acetobutylicum (strain ATCC 824 / DSM 792 / JCM 1419 / IAM 19013 / LMG 5710 / NBRC 13948 / NRRL B-527 / VKM B-1787 / 2291 / W).